A 424-amino-acid chain; its full sequence is Phosphoribosylamine--glycine ligase (424 aa).

Residues 111–312 (KAFVKECGIK…LLDLFLATAK (202 aa)) enclose the ATP-grasp domain. 137 to 189 (IQNASFPLVIKALNKNTSIVHHQEEALKILEDALKQSNEPVIIEPFLEGFELS) serves as a coordination point for ATP.

It belongs to the GARS family.

It catalyses the reaction 5-phospho-beta-D-ribosylamine + glycine + ATP = N(1)-(5-phospho-beta-D-ribosyl)glycinamide + ADP + phosphate + H(+). Its pathway is purine metabolism; IMP biosynthesis via de novo pathway; N(1)-(5-phospho-D-ribosyl)glycinamide from 5-phospho-alpha-D-ribose 1-diphosphate: step 2/2. This chain is Phosphoribosylamine--glycine ligase (purD), found in Helicobacter pylori (strain J99 / ATCC 700824) (Campylobacter pylori J99).